Here is a 500-residue protein sequence, read N- to C-terminus: Lariat debranching enzyme (500 aa).

Residues 1–25 (MSSKNPVDEQPCCGSHEGSHQDPAP) form a disordered region. C48, H50, D79, and N124 together coordinate a divalent metal cation. The interval 164 to 194 (SGIFSQGDFQFSHYERPSFSERDVKSAYHVR) is lariat recognition loop. 3 residues coordinate a divalent metal cation: H222, H274, and H276. A disordered region spans residues 453–500 (DDANAKPNQDDVDFGDEDFVIDRGHTSDEPEAKKSRLDEDKFEAVPSE). Residues 462–471 (DDVDFGDEDF) show a composition bias toward acidic residues. The segment covering 472–500 (VIDRGHTSDEPEAKKSRLDEDKFEAVPSE) has biased composition (basic and acidic residues).

This sequence belongs to the lariat debranching enzyme family. Fe(2+) serves as cofactor. Requires Zn(2+) as cofactor. Mn(2+) is required as a cofactor.

Its subcellular location is the nucleus. Active in presence of diverse metals including Fe(2+), Zn(2+), Mn(2+). Binds two metal cations in two adjacent alpha and beta metal-binding pockets. Its function is as follows. Cleaves the 2'-5' phosphodiester linkage at the branch point of lariat intron pre-mRNAs after splicing and converts them into linear molecules that are subsequently degraded. It thereby facilitates ribonucleotide turnover. The polypeptide is Lariat debranching enzyme (Caenorhabditis elegans).